Reading from the N-terminus, the 300-residue chain is Cytochrome b (300 aa).

Transmembrane regions (helical) follow at residues 28–48 (YGFL…LLAL), 72–94 (WCFR…LHIL), 107–127 (SWIS…YGYV), 168–187 (FFVF…FGIL), 223–243 (IPNK…LFLL), and 279–299 (IGCQ…YIIL). 2 residues coordinate heme b: His78 and His92.

The protein belongs to the cytochrome b family. The main subunits of complex b-c1 are: cytochrome b, cytochrome c1 and the Rieske protein. The cofactor is heme b.

Its subcellular location is the mitochondrion inner membrane. Its function is as follows. Component of the ubiquinol-cytochrome c reductase complex (complex III or cytochrome b-c1 complex) that is part of the mitochondrial respiratory chain. The b-c1 complex mediates electron transfer from ubiquinol to cytochrome c. Contributes to the generation of a proton gradient across the mitochondrial membrane that is then used for ATP synthesis. In Plasmodium gallinaceum, this protein is Cytochrome b (MT-CYB).